Reading from the N-terminus, the 155-residue chain is MSKKVINVVLKENIQKLGKSNDVIKVASGYARNFLIPNKMAAVATNGILKQQKFYAAIREEKLKTAKENAKKVKQLLEEIQRFSVSKKTGDGHNIFGSVTEKEISQIIKNTTNIDIEKQSISLPDVKTIGIYDVEIKLLHQVTANIKLQVLPESN.

This sequence belongs to the bacterial ribosomal protein bL9 family.

It is found in the plastid. The protein resides in the chloroplast. In terms of biological role, binds to the 23S rRNA. This is Large ribosomal subunit protein bL9c from Pyropia yezoensis (Susabi-nori).